Consider the following 931-residue polypeptide: Kinesin heavy chain (931 aa).

Residues 6 to 329 (SIKVVARFRP…LRFGMRAKSI (324 aa)) form the Kinesin motor domain. ATP contacts are provided by residues 87–94 (GQTGAGKS) and 237–244 (GSEKVGKT). A coiled-coil region spans residues 342-864 (AELKSLLKKA…VKERLELAKA (523 aa)). 2 disordered regions span residues 388 to 465 (TTDA…EKQL) and 886 to 931 (AKPL…FTKS). Residues 402–419 (STRPSTPSLISDSRSETP) show a composition bias toward polar residues. The span at 432–456 (LDKDEREEFLRRENELQDQISEKES) shows a compositional bias: basic and acidic residues. Polar residues predominate over residues 902 to 931 (PTIQNLQGQNEGNTSSGSSSKRASWFFTKS).

Belongs to the TRAFAC class myosin-kinesin ATPase superfamily. Kinesin family. Kinesin subfamily.

Its subcellular location is the cytoplasm. It localises to the cytoskeleton. Kinesin is a microtubule-associated force-producing protein that may play a role in organelle transport. Its motor activity is directed toward the microtubule's plus end. In Gibberella moniliformis (Maize ear and stalk rot fungus), this protein is Kinesin heavy chain (KLP1).